Consider the following 323-residue polypeptide: Viral cathepsin (323 aa).

An N-terminal signal peptide occupies residues 1 to 18 (MSKFLLYWFVYGVVCSAA). A propeptide spans 19–112 (YDILKAPNYF…VVLDRPPGKG (94 aa)) (activation peptide). 3 disulfide bridges follow: C133/C174, C167/C207, and C262/C310. C136 is a catalytic residue. An N-linked (GlcNAc...) asparagine; by host glycan is attached at N158. Residues H269 and N289 contribute to the active site.

Belongs to the peptidase C1 family. Synthesized as an inactive proenzyme and activated by proteolytic removal of the inhibitory propeptide.

The enzyme catalyses Endopeptidase of broad specificity, hydrolyzing substrates of both cathepsin L and cathepsin B.. Functionally, cysteine protease that plays an essential role in host liquefaction to facilitate horizontal transmission of the virus. May participate in the degradation of foreign protein expressed by the baculovirus system. The sequence is that of Viral cathepsin (VCATH) from Lepidoptera (butterflies and moths).